The sequence spans 248 residues: Small ribosomal subunit protein eS6 (248 aa).

The disordered stretch occupies residues 213 to 248 (LLAQRKKESKAKREEAKRRRSASMRESKSSISSDKK). The segment covering 223 to 248 (AKREEAKRRRSASMRESKSSISSDKK) has biased composition (basic and acidic residues).

It belongs to the eukaryotic ribosomal protein eS6 family. As to quaternary structure, component of the small ribosomal subunit. Part of the small subunit (SSU) processome, composed of more than 70 proteins and the RNA chaperone small nucleolar RNA (snoRNA) U3. Post-translationally, ribosomal protein S6 is the major substrate of protein kinases in eukaryote ribosomes.

The protein resides in the cytoplasm. It localises to the nucleus. The protein localises to the nucleolus. Functionally, component of the 40S small ribosomal subunit. Plays an important role in controlling cell growth and proliferation through the selective translation of particular classes of mRNA. Part of the small subunit (SSU) processome, first precursor of the small eukaryotic ribosomal subunit. During the assembly of the SSU processome in the nucleolus, many ribosome biogenesis factors, an RNA chaperone and ribosomal proteins associate with the nascent pre-rRNA and work in concert to generate RNA folding, modifications, rearrangements and cleavage as well as targeted degradation of pre-ribosomal RNA by the RNA exosome. In Glossina morsitans morsitans (Savannah tsetse fly), this protein is Small ribosomal subunit protein eS6 (RpS6).